We begin with the raw amino-acid sequence, 376 residues long: Ribosomal RNA large subunit methyltransferase G (376 aa).

This sequence belongs to the methyltransferase superfamily. RlmG family.

The protein resides in the cytoplasm. The catalysed reaction is guanosine(1835) in 23S rRNA + S-adenosyl-L-methionine = N(2)-methylguanosine(1835) in 23S rRNA + S-adenosyl-L-homocysteine + H(+). Its function is as follows. Specifically methylates the guanine in position 1835 (m2G1835) of 23S rRNA. The polypeptide is Ribosomal RNA large subunit methyltransferase G (Cronobacter sakazakii (strain ATCC BAA-894) (Enterobacter sakazakii)).